Here is a 328-residue protein sequence, read N- to C-terminus: uncharacterized protein (328 aa).

Residues Arg-3–Gly-126 enclose the Bro-N domain.

This is an uncharacterized protein from Autographa californica nuclear polyhedrosis virus (AcMNPV).